Reading from the N-terminus, the 197-residue chain is Probable GTP-binding protein EngB (197 aa).

The 174-residue stretch at 22–195 (NLPEIAFVGR…VDYLFDDLVE (174 aa)) folds into the EngB-type G domain. Residues 30-37 (GRSNVGKS), 57-61 (GKTRL), 75-78 (DLPG), 142-145 (TKSD), and 174-176 (FSS) each bind GTP. The Mg(2+) site is built by serine 37 and threonine 59.

The protein belongs to the TRAFAC class TrmE-Era-EngA-EngB-Septin-like GTPase superfamily. EngB GTPase family. Requires Mg(2+) as cofactor.

Necessary for normal cell division and for the maintenance of normal septation. The protein is Probable GTP-binding protein EngB of Clostridium perfringens (strain 13 / Type A).